Reading from the N-terminus, the 318-residue chain is Probable serine/threonine-protein kinase MRK1 homolog (318 aa).

Residues 40 to 313 enclose the Protein kinase domain; the sequence is YRYVEMIGRG…ASELLRKQFF (274 aa). Residues 46–54 and lysine 68 contribute to the ATP site; that span reads IGRGSFGVV. The active-site Proton acceptor is the aspartate 159.

The protein belongs to the protein kinase superfamily. CMGC Ser/Thr protein kinase family. GSK-3 subfamily.

The protein resides in the cytoplasm. Its subcellular location is the nucleus. The catalysed reaction is L-seryl-[protein] + ATP = O-phospho-L-seryl-[protein] + ADP + H(+). It catalyses the reaction L-threonyl-[protein] + ATP = O-phospho-L-threonyl-[protein] + ADP + H(+). Functionally, may play a role in the initiation and completion of mitosis. The protein is Probable serine/threonine-protein kinase MRK1 homolog (MRK1) of Encephalitozoon cuniculi (strain GB-M1) (Microsporidian parasite).